Reading from the N-terminus, the 504-residue chain is Facilitated trehalose transporter Tret1 (504 aa).

The Cytoplasmic portion of the chain corresponds to 1 to 39 (MELNNKEDSPRHTVPFVRQITEDGKAKLEIYRPTTNPIY). The chain crosses the membrane as a helical span at residues 40-60 (IYTQILAAIAVSMGSMVVGFA). The Extracellular portion of the chain corresponds to 61–87 (SAYTSPALVSMQNTTITSFKVTEQEAS). N73 carries an N-linked (GlcNAc...) asparagine glycan. A helical transmembrane segment spans residues 88 to 108 (WVGGIMPLAGLAGGIAGGPFI). Residues 109-120 (EYLGRKNTILAT) lie on the Cytoplasmic side of the membrane. Residues 121–141 (AVPFIVAWLLIAFANSIWMVL) form a helical membrane-spanning segment. At 142-145 (AGRA) the chain is on the extracellular side. A helical membrane pass occupies residues 146 to 166 (LSGFCVGIASLSLPVYLGETV). Residues 167 to 171 (QPEVR) are Cytoplasmic-facing. Residues 172–192 (GTLGLLPTAFGNIGILICFVA) form a helical membrane-spanning segment. At 193 to 199 (GKYVNWS) the chain is on the extracellular side. N197 carries N-linked (GlcNAc...) asparagine glycosylation. The helical transmembrane segment at 200 to 220 (GLAFIGSILPIPFMVLTLLIP) threads the bilayer. The Cytoplasmic segment spans residues 221–283 (ETPRWFVTRG…DLMKRSNLKP (63 aa)). Residues 284-304 (LLIALGLMFFQQLSGINAVIF) form a helical membrane-spanning segment. Residues 305-320 (YTVSIFKDAGSTIDEN) are Extracellular-facing. Residues 321–341 (LCTIIVGVVNFGATFFATVLI) form a helical membrane-spanning segment. At 342-347 (DRLGRK) the chain is on the cytoplasmic side. A helical membrane pass occupies residues 348 to 368 (ILLYISEVAMVITLLTLGTFF). Topologically, residues 369–387 (YYKNSGNDVSNIGWLPLAS) are extracellular. Residues 388-408 (FVIYVIGFSSGVGPIPWLMLG) traverse the membrane as a helical segment. Topologically, residues 409–424 (EILPGKIRGSAASVAT) are cytoplasmic. A helical membrane pass occupies residues 425–445 (GFNWTCTFIVTKTFADIVAAI). The Extracellular portion of the chain corresponds to 446–448 (GNH). A helical membrane pass occupies residues 449–469 (GAFWFFGVICLIGLFFVIFFV). Over 470-504 (PETQGKSLEEIERKMMGRVRRMSSVANMKPLSFNM) the chain is Cytoplasmic.

Belongs to the major facilitator superfamily. Sugar transporter (TC 2.A.1.1) family. Trehalose transporter subfamily. As to expression, highest expression in the fat body. Not expressed in other tissues including the midgut, muscle, and integuments after 24 hours of dehydration.

The protein localises to the cell membrane. Functionally, high-capacity facilitative transporter for trehalose, required to induce anhydrobiosis. Anhydrobiotic larvae can survive almost complete dehydration. Does not transport maltose, sucrose or lactose. Mediates the bidirectional transfer of trehalose. Responsible for the transport of trehalose synthesized in the fat body and the incorporation of trehalose into other tissues that require a carbon source, thereby regulating trehalose levels in the hemolymph. This Polypedilum vanderplanki (Sleeping chironomid midge) protein is Facilitated trehalose transporter Tret1.